Consider the following 161-residue polypeptide: Putative pre-16S rRNA nuclease (161 aa).

The protein belongs to the YqgF nuclease family.

It is found in the cytoplasm. In terms of biological role, could be a nuclease involved in processing of the 5'-end of pre-16S rRNA. This is Putative pre-16S rRNA nuclease from Bradyrhizobium sp. (strain BTAi1 / ATCC BAA-1182).